The following is a 198-amino-acid chain: Phosphoheptose isomerase (198 aa).

Residues 40-198 (IVTALRSGRK…IEAALMQDLS (159 aa)) form the SIS domain. Residue 55-57 (NGG) participates in substrate binding. The Zn(2+) site is built by His-64 and Glu-68. Substrate is bound by residues Glu-68, 97-98 (ND), 123-125 (STS), Ser-128, and Gln-175. Positions 175 and 183 each coordinate Zn(2+).

The protein belongs to the SIS family. GmhA subfamily. Homotetramer. It depends on Zn(2+) as a cofactor.

The protein localises to the cytoplasm. The enzyme catalyses 2 D-sedoheptulose 7-phosphate = D-glycero-alpha-D-manno-heptose 7-phosphate + D-glycero-beta-D-manno-heptose 7-phosphate. It functions in the pathway carbohydrate biosynthesis; D-glycero-D-manno-heptose 7-phosphate biosynthesis; D-glycero-alpha-D-manno-heptose 7-phosphate and D-glycero-beta-D-manno-heptose 7-phosphate from sedoheptulose 7-phosphate: step 1/1. Functionally, catalyzes the isomerization of sedoheptulose 7-phosphate in D-glycero-D-manno-heptose 7-phosphate. The chain is Phosphoheptose isomerase from Bradyrhizobium sp. (strain BTAi1 / ATCC BAA-1182).